We begin with the raw amino-acid sequence, 589 residues long: MTSLAKNLSAAAGAAFEAMGLEARFGEVRRSDKPELADFQCNGAMAAAKAAGKNPREIAGEIAARLKEHASVLSAEVAGPGFINLRVSDAALSARAEHVRGDAMAGAEKAADAAVTVIDFGGANVAKPMHVGHLRSAVIGDTLQRICRFAGDEVTSDVHLGDWGLQMGHLVTELYDEQPGLIYFDAAYTGPYPAEPPVTIDDLGRLYPQASNKAKADAARNERSQKAVAEMQAGRPGYRALLRHFIEVSIEALKLDYGFLNVSFDLWKGESDVDGLIPGLVERFKQAGLAEESDGALIVHVARETDKKEMPPVMLVNSRGGTGYHTTDLATILDRMDTLTTTPERMLYVVDQRQALHFEQVFRAAGMLGLIAEDKLEHIGFGTVNGADGKPFKTREGGVLRLADLQAMAMEEAEKKLSAANLPADMGDAERFDVAKKVAVAALRFSDLMNTRTTNYVFDLERFTSFEGKTGPYLMYAAVRVKSVLRKAAENGHSAGKVVVTEDAERTLVLQLDGFGAALLGAREKRMPHILCEHLYGLAQAFSSFYAALPIAAEADGEKRASRLALADGVRHQLETGLELLGIAVPERM.

A 'HIGH' region motif is present at residues 123–133 (ANVAKPMHVGH).

It belongs to the class-I aminoacyl-tRNA synthetase family. Monomer.

Its subcellular location is the cytoplasm. The catalysed reaction is tRNA(Arg) + L-arginine + ATP = L-arginyl-tRNA(Arg) + AMP + diphosphate. The sequence is that of Arginine--tRNA ligase from Hyphomonas neptunium (strain ATCC 15444).